A 149-amino-acid polypeptide reads, in one-letter code: Glutamyl-tRNA(Gln) amidotransferase subunit C, mitochondrial (149 aa).

Belongs to the GatC family. In terms of assembly, subunit of the heterotrimeric GatCAB amidotransferase (AdT) complex, composed of A, B and C subunits.

The protein resides in the mitochondrion. The catalysed reaction is L-glutamyl-tRNA(Gln) + L-glutamine + ATP + H2O = L-glutaminyl-tRNA(Gln) + L-glutamate + ADP + phosphate + H(+). In terms of biological role, allows the formation of correctly charged Gln-tRNA(Gln) through the transamidation of misacylated Glu-tRNA(Gln) in the mitochondria. The reaction takes place in the presence of glutamine and ATP through an activated gamma-phospho-Glu-tRNA(Gln). This is Glutamyl-tRNA(Gln) amidotransferase subunit C, mitochondrial from Trichoplax adhaerens (Trichoplax reptans).